Here is a 446-residue protein sequence, read N- to C-terminus: uncharacterized protein (446 aa).

Disordered regions lie at residues 198-233 (SIQK…ENYS), 309-337 (NEDN…DDSK), and 394-431 (SESV…FGNT). Low complexity predominate over residues 199 to 224 (IQKQIPKQTQEQTQKQTQEQTQESSQ). The span at 317 to 333 (DNEEDSDESDIESDSDL) shows a compositional bias: acidic residues. Residues 397-418 (VKSDSNESKSIKPESIKSESIK) are compositionally biased toward basic and acidic residues.

This is an uncharacterized protein from Acanthamoeba polyphaga mimivirus (APMV).